The primary structure comprises 269 residues: Phosphate import ATP-binding protein PstB 2 (269 aa).

Residues 23–264 form the ABC transporter domain; the sequence is LEVKDLSIYY…PKKQKTEDYI (242 aa). ATP is bound at residue 55-62; the sequence is GPSGCGKS.

The protein belongs to the ABC transporter superfamily. Phosphate importer (TC 3.A.1.7) family. The complex is composed of two ATP-binding proteins (PstB), two transmembrane proteins (PstC and PstA) and a solute-binding protein (PstS).

Its subcellular location is the cell membrane. The catalysed reaction is phosphate(out) + ATP + H2O = ADP + 2 phosphate(in) + H(+). Its function is as follows. Part of the ABC transporter complex PstSACB involved in phosphate import. Responsible for energy coupling to the transport system. The chain is Phosphate import ATP-binding protein PstB 2 from Bacillus subtilis (strain 168).